Consider the following 493-residue polypeptide: MFKLAFTLTLCLAGSLSLAQHNPHWWGNRNTIVHLFEWKWLDIAQECENFLGPQGFAGVQVSPVNENIISAGRPWWERYQPISYKLTTRSGNEEEFGDMVRRCNDVGVRIYVDVLLNHMSGDFDGVAVGTAGTEAEPRKKSFPGVPYTAQDFHPTCEITDWNDRFQVQQCELVGLKDLNQSSDWVRSKLIEFLDHLIELGVAGFRVDAAKHMASEDLEFIYSSLSNLNIAHGFPHNSRPFIFQEVIDHGHETVSRDEYKDLGAVTEFRFSEEIGNAFRGNNALKWLQSWGTGWGFLPSGQALTFVDNHDNQRDAGAVLSYKSPKPYKMATAFHLAYPYGISRVMSSFAFDDHDTPPPQDAQERIISPEFDEDGACVNGWICEHRWRQIYAMVGFKNAVRDTEITGWWDNGDSQISFCRGNKGFLALNNNLYDLSQDLNTCLPAGTYCDVISGSLIDGSCTGKSVTVNEQGYGYIHIGSDDFDGVLALHVDAKV.

Positions 1–19 are cleaved as a signal peptide; the sequence is MFKLAFTLTLCLAGSLSLA. Position 20 is a pyrrolidone carboxylic acid (Q20). A disulfide bond links C47 and C103. 3 residues coordinate Ca(2+): N117, Q168, and D177. Cysteines 156 and 170 form a disulfide. R205 provides a ligand contact to chloride. The Nucleophile role is filled by D207. H211 contacts Ca(2+). E244 functions as the Proton donor in the catalytic mechanism. 2 residues coordinate chloride: N307 and R342. 3 disulfide bridges follow: C375–C381, C417–C440, and C447–C459.

It belongs to the glycosyl hydrolase 13 family. As to quaternary structure, monomer. The cofactor is Ca(2+). Chloride serves as cofactor.

It is found in the secreted. It catalyses the reaction Endohydrolysis of (1-&gt;4)-alpha-D-glucosidic linkages in polysaccharides containing three or more (1-&gt;4)-alpha-linked D-glucose units.. The protein is Alpha-amylase-related protein (Amyrel) of Drosophila orena (Fruit fly).